Reading from the N-terminus, the 385-residue chain is tRNA-specific 2-thiouridylase MnmA (385 aa).

ATP contacts are provided by residues 30-37 (GMSGGVDS) and methionine 56. Residues 118–120 (NPD) form an interaction with target base in tRNA region. Cysteine 123 serves as the catalytic Nucleophile. A disulfide bridge connects residues cysteine 123 and cysteine 220. Glycine 148 lines the ATP pocket. Residues 170–172 (KDQ) form an interaction with tRNA region. Cysteine 220 serves as the catalytic Cysteine persulfide intermediate. Positions 332-333 (RY) are interaction with tRNA.

It belongs to the MnmA/TRMU family.

Its subcellular location is the cytoplasm. It carries out the reaction S-sulfanyl-L-cysteinyl-[protein] + uridine(34) in tRNA + AH2 + ATP = 2-thiouridine(34) in tRNA + L-cysteinyl-[protein] + A + AMP + diphosphate + H(+). Functionally, catalyzes the 2-thiolation of uridine at the wobble position (U34) of tRNA, leading to the formation of s(2)U34. The chain is tRNA-specific 2-thiouridylase MnmA from Haemophilus influenzae (strain PittGG).